Here is a 246-residue protein sequence, read N- to C-terminus: 5'-nucleotidase SurE (246 aa).

A divalent metal cation contacts are provided by aspartate 8, aspartate 9, serine 39, and asparagine 91.

This sequence belongs to the SurE nucleotidase family. A divalent metal cation serves as cofactor.

It is found in the cytoplasm. It catalyses the reaction a ribonucleoside 5'-phosphate + H2O = a ribonucleoside + phosphate. Functionally, nucleotidase that shows phosphatase activity on nucleoside 5'-monophosphates. This Actinobacillus succinogenes (strain ATCC 55618 / DSM 22257 / CCUG 43843 / 130Z) protein is 5'-nucleotidase SurE.